A 448-amino-acid chain; its full sequence is Amino-acid acetyltransferase (448 aa).

The N-acetyltransferase domain occupies 295–433; that stretch reads EQIRRANIND…KQVLYNYQRR (139 aa).

Belongs to the acetyltransferase family. ArgA subfamily. In terms of assembly, homohexamer.

The protein localises to the cytoplasm. It carries out the reaction L-glutamate + acetyl-CoA = N-acetyl-L-glutamate + CoA + H(+). It participates in amino-acid biosynthesis; L-arginine biosynthesis; N(2)-acetyl-L-ornithine from L-glutamate: step 1/4. This is Amino-acid acetyltransferase from Photorhabdus laumondii subsp. laumondii (strain DSM 15139 / CIP 105565 / TT01) (Photorhabdus luminescens subsp. laumondii).